We begin with the raw amino-acid sequence, 460 residues long: Elongation factor 1-alpha (460 aa).

At glycine 2 the chain carries N,N,N-trimethylglycine. An N6,N6-dimethyllysine; alternate modification is found at lysine 3. Lysine 3 carries the N6-methyllysine; alternate modification. The region spanning 6–241 (KTHINVVVIG…DSIEPPKRPT (236 aa)) is the tr-type G domain. Positions 15–22 (GHVDSGKS) are G1. 15-22 (GHVDSGKS) serves as a coordination point for GTP. Position 31 is an N6-methyllysine (lysine 31). Residues 71–75 (GITID) form a G2 region. Lysine 80 is subject to N6,N6,N6-trimethyllysine. Positions 92-95 (DAPG) are G3. GTP-binding positions include 92-96 (DAPGH) and 154-157 (NKMD). Residues 154–157 (NKMD) are G4. The G5 stretch occupies residues 193-195 (SGF). Lysine 317 is subject to N6,N6-dimethyllysine; alternate. Lysine 317 is modified (N6-methyllysine; alternate). Position 391 is an N6-methyllysine (lysine 391).

Belongs to the TRAFAC class translation factor GTPase superfamily. Classic translation factor GTPase family. EF-Tu/EF-1A subfamily.

The protein localises to the cytoplasm. In terms of biological role, this protein promotes the GTP-dependent binding of aminoacyl-tRNA to the A-site of ribosomes during protein biosynthesis. The polypeptide is Elongation factor 1-alpha (TEF) (Podospora anserina (Pleurage anserina)).